Here is a 261-residue protein sequence, read N- to C-terminus: 3-methyl-2-oxobutanoate hydroxymethyltransferase (261 aa).

Positions 44 and 83 each coordinate Mg(2+). 3-methyl-2-oxobutanoate is bound by residues 44-45 (DS), aspartate 83, and lysine 112. Glutamate 114 lines the Mg(2+) pocket. Glutamate 181 functions as the Proton acceptor in the catalytic mechanism.

Belongs to the PanB family. As to quaternary structure, homodecamer; pentamer of dimers. Mg(2+) serves as cofactor.

It is found in the cytoplasm. The catalysed reaction is 3-methyl-2-oxobutanoate + (6R)-5,10-methylene-5,6,7,8-tetrahydrofolate + H2O = 2-dehydropantoate + (6S)-5,6,7,8-tetrahydrofolate. It participates in cofactor biosynthesis; (R)-pantothenate biosynthesis; (R)-pantoate from 3-methyl-2-oxobutanoate: step 1/2. In terms of biological role, catalyzes the reversible reaction in which hydroxymethyl group from 5,10-methylenetetrahydrofolate is transferred onto alpha-ketoisovalerate to form ketopantoate. The sequence is that of 3-methyl-2-oxobutanoate hydroxymethyltransferase from Acidithiobacillus ferrooxidans (strain ATCC 23270 / DSM 14882 / CIP 104768 / NCIMB 8455) (Ferrobacillus ferrooxidans (strain ATCC 23270)).